Consider the following 103-residue polypeptide: Large ribosomal subunit protein uL24 (103 aa).

The protein belongs to the universal ribosomal protein uL24 family. Part of the 50S ribosomal subunit.

In terms of biological role, one of two assembly initiator proteins, it binds directly to the 5'-end of the 23S rRNA, where it nucleates assembly of the 50S subunit. One of the proteins that surrounds the polypeptide exit tunnel on the outside of the subunit. This is Large ribosomal subunit protein uL24 from Ruthia magnifica subsp. Calyptogena magnifica.